The primary structure comprises 398 residues: 1-aminocyclopropane-1-carboxylate oxidase homolog 5 (398 aa).

The region spanning Lys247–Thr347 is the Fe2OG dioxygenase domain. Fe cation is bound by residues His271, Asp273, and His327. Position 338 (Arg338) interacts with 2-oxoglutarate.

This sequence belongs to the iron/ascorbate-dependent oxidoreductase family. Requires Fe(2+) as cofactor. In terms of tissue distribution, expressed in etiolated seedlings, leaves, stems and flowers.

This is 1-aminocyclopropane-1-carboxylate oxidase homolog 5 (2A6) from Arabidopsis thaliana (Mouse-ear cress).